Reading from the N-terminus, the 344-residue chain is Zinc transporter 9 (344 aa).

Residues 1-21 (MASILISGAAGVSIPLVGTLL) form a helical membrane-spanning segment. At 22–30 (PLNGGLMRG) the chain is on the cytoplasmic side. A helical membrane pass occupies residues 31–51 (AKAFAAGVILATGFVHMLSGG). Residues 52–72 (SKALSDPCLPEFPWKMFPFPE) lie on the Extracellular side of the membrane. Residues 73–93 (FFAMVAALLTLLADFMITGYY) form a helical membrane-spanning segment. Over 94–188 (ERKQEKMMNQ…DVGLDSGVRH (95 aa)) the chain is Cytoplasmic. Residues 189–209 (VVVSQILEMGIVSHSIIIGIS) traverse the membrane as a helical segment. At 210-221 (LGVSHSPCTIRP) the chain is on the extracellular side. A helical transmembrane segment spans residues 222–242 (LLLALSFHQFFEGFALGGCVA). Residues 243 to 251 (EARLTPRGS) lie on the Cytoplasmic side of the membrane. The chain crosses the membrane as a helical span at residues 252–272 (AMMAFFFAITTPIGVAVGTAI). At 273–291 (ASSYNSYSVAALVAEGVLD) the chain is on the extracellular side. The helical transmembrane segment at 292–312 (SLSAGILVYMALVDLIAADFL) threads the bilayer. The Cytoplasmic portion of the chain corresponds to 313 to 323 (SKKMSVDFRVQ). A helical transmembrane segment spans residues 324-344 (VVSYCFLFLGAGMMSALAIWA).

Belongs to the ZIP transporter (TC 2.A.5) family.

Its subcellular location is the cell membrane. Zinc transporter involved in zinc uptake in roots. Targeted by BZIP19 transcription factor in response to zinc-deficient conditions. This is Zinc transporter 9 (ZIP9) from Arabidopsis thaliana (Mouse-ear cress).